We begin with the raw amino-acid sequence, 515 residues long: MLLWASLLAFAPVCGQSAAAHKPVISVHPPWTTFFKGERVTLTCNGFQFYATEKTTWYHRHYWGEKLTLTPGNTLEVRESGLYRCQARGSPRSNPVRLLFSSDSLILQAPYSVFEGDTLVLRCHRRRKEKLTAVKYTWNGNILSISNKSWDLLIPQASSNNNGNYRCIGYGDENDVFRSNFKIIKIQELFPHPELKATDSQPTEGNSVNLSCETQLPPERSDTPLHFNFFRDGEVILSDWSTYPELQLPTVWRENSGSYWCGAETVRGNIHKHSPSLQIHVQRIPVSGVLLETQPSGGQAVEGEMLVLVCSVAEGTGDTTFSWHREDMQESLGRKTQRSLRAELELPAIRQSHAGGYYCTADNSYGPVQSMVLNVTVRETPGNRDGLVAAGATGGLLSALLLAVALLFHCWRRRKSGVGFLGDETRLPPAPGPGESSHSICPAQVELQSLYVDVHPKKGDLVYSEIQTTQLGEEEEANTSRTLLEDKDVSVVYSEVKTQHPDNSAGKISSKDEES.

The N-terminal stretch at 1-19 is a signal peptide; that stretch reads MLLWASLLAFAPVCGQSAA. At 20-387 the chain is on the extracellular side; that stretch reads AHKPVISVHP…RETPGNRDGL (368 aa). 4 Ig-like C2-type domains span residues 23 to 97, 102 to 183, 193 to 271, and 275 to 374; these read PVIS…NPVR, SDSL…NFKI, PELK…GNIH, and PSLQ…MVLN. 4 cysteine pairs are disulfide-bonded: Cys-44–Cys-85, Cys-123–Cys-167, Cys-212–Cys-261, and Cys-310–Cys-359. Asn-374 carries an N-linked (GlcNAc...) asparagine glycan. A helical membrane pass occupies residues 388-408; sequence VAAGATGGLLSALLLAVALLF. Residues 409 to 515 lie on the Cytoplasmic side of the membrane; that stretch reads HCWRRRKSGV…GKISSKDEES (107 aa). Short sequence motifs (ITIM motif) lie at residues 449–454, 461–466, and 491–496; these read SLYVDV, LVYSEI, and VVYSEV. Positions 494-515 are disordered; the sequence is SEVKTQHPDNSAGKISSKDEES.

Interacts with PTPN6 and PTPN11. Phosphorylated on cytoplasmic tyrosines upon activation. Specifically expressed by memory and monocytoid B-cells which populate spleen and lymph nodes. Preferentially expressed in memory B-cells associated with mucosal tissue (at protein level).

The protein resides in the cell membrane. May function as an inhibitor of the B-cell receptor signaling. May function in the B-cell-mediated immune response. The protein is Fc receptor-like protein 4 (FCRL4) of Homo sapiens (Human).